A 750-amino-acid polypeptide reads, in one-letter code: Photosystem I P700 chlorophyll a apoprotein A1 (750 aa).

The next 8 helical transmembrane spans lie at 70–93 (VFSAHFGQLAIIFIWLSGMYFHGA), 156–179 (LYSTAIGGLIFAALMLFAGWFHYH), 195–219 (LNHHLAGLLGLGSLAWAGHQVHVSL), 291–309 (TAHHHLAIAVVFLVAGHMY), 346–369 (WHAQLALNLAMLGSLTIIVAHHMY), 385–411 (LSLFTHHMWIGGFTIVGAAAHAAIFMV), 433–455 (AIISHLNWACIFLGFHSFGLYIH), and 531–549 (FLVHHIHAFTIHVTVLILL). [4Fe-4S] cluster-binding residues include C573 and C582. The next 2 helical transmembrane spans lie at 589–610 (HVFLGLFWMYNAISVVIFHFSW) and 664–686 (LSAYGLLFLGAHFVWAFSLMFLF). Chlorophyll a' is bound at residue H675. 2 residues coordinate chlorophyll a: M683 and Y691. Phylloquinone is bound at residue W692. The helical transmembrane segment at 724–744 (AVGVAHYLLGGIATTWAFFLA) threads the bilayer.

The protein belongs to the PsaA/PsaB family. As to quaternary structure, the PsaA/B heterodimer binds the P700 chlorophyll special pair and subsequent electron acceptors. PSI consists of a core antenna complex that captures photons, and an electron transfer chain that converts photonic excitation into a charge separation. The eukaryotic PSI reaction center is composed of at least 11 subunits. The cofactor is P700 is a chlorophyll a/chlorophyll a' dimer, A0 is one or more chlorophyll a, A1 is one or both phylloquinones and FX is a shared 4Fe-4S iron-sulfur center..

It is found in the plastid. The protein localises to the chloroplast thylakoid membrane. The catalysed reaction is reduced [plastocyanin] + hnu + oxidized [2Fe-2S]-[ferredoxin] = oxidized [plastocyanin] + reduced [2Fe-2S]-[ferredoxin]. In terms of biological role, psaA and PsaB bind P700, the primary electron donor of photosystem I (PSI), as well as the electron acceptors A0, A1 and FX. PSI is a plastocyanin-ferredoxin oxidoreductase, converting photonic excitation into a charge separation, which transfers an electron from the donor P700 chlorophyll pair to the spectroscopically characterized acceptors A0, A1, FX, FA and FB in turn. Oxidized P700 is reduced on the lumenal side of the thylakoid membrane by plastocyanin. The polypeptide is Photosystem I P700 chlorophyll a apoprotein A1 (Anthoceros angustus (Hornwort)).